The primary structure comprises 174 residues: Pituitary tumor-transforming gene 1 protein-interacting protein (174 aa).

The N-terminal stretch at 1 to 29 is a signal peptide; sequence MAPANLGLTPHWVMLLGAVLLLLLSGASA. The Extracellular segment spans residues 30-93; it reads QEPPRVGCSE…RWGVCWVNFE (64 aa). In terms of domain architecture, PSI spans 36–89; that stretch reads GCSEYTNRSCEECLRNVSCLWCNENKACMDYPVRKILPPASLCKLSSARWGVCW. Asn42 and Asn51 each carry an N-linked (GlcNAc...) asparagine glycan. A helical transmembrane segment spans residues 94–114; the sequence is ALIITMSVLGGSVLLGITVCC. Residues 115-174 are Cytoplasmic-facing; sequence CYCCRRKKSRKPDKSDERAMREQEERRVRQEERRAEMKSRHDEIRKKYGLFKEQNPYEKF. Residues 125–155 form a disordered region; that stretch reads KPDKSDERAMREQEERRVRQEERRAEMKSRH. The segment covering 126–155 has biased composition (basic and acidic residues); the sequence is PDKSDERAMREQEERRVRQEERRAEMKSRH. The stretch at 127–163 forms a coiled coil; that stretch reads DKSDERAMREQEERRVRQEERRAEMKSRHDEIRKKYG. Tyr171 carries the phosphotyrosine modification.

In terms of assembly, interacts with PTTG1.

Its subcellular location is the cell membrane. It localises to the cytoplasm. It is found in the nucleus. Functionally, may facilitate PTTG1 nuclear translocation. The sequence is that of Pituitary tumor-transforming gene 1 protein-interacting protein (Pttg1ip) from Mus musculus (Mouse).